Consider the following 275-residue polypeptide: MTYQKQYQMQTHHMQQQQLHHFVFVHGSCHGAWCWFKLAAKLKLDGHRVTAIDLGGSGVDTRQLHEVRLVSAYLEPLMSFMESLPENEKVVLVGHSYGGIGTSLAMERFPTKVSVGIFLSAYMPHHDSPPAVLIQEYFTRLPEGFAMDCEFTFEEGLEHPPSSVLFGTSFLKEKAYSNCQLEDLELAMALMKPSWLYTKEMGGEDLITKERYGSGKRVFIVCEGDNVVPEEIQKWMISNYEPHEVKRIEEAGHMAMLTKPHELSQLLQEIAAKYN.

The active-site Acyl-ester intermediate is the Ser96. Active-site charge relay system residues include Asp225 and His253.

This sequence belongs to the AB hydrolase superfamily. Methylesterase family.

The catalysed reaction is methyl (-)-jasmonate + H2O = jasmonate + methanol + H(+). Its pathway is plant hormone biosynthesis. It functions in the pathway lipid metabolism; oxylipin biosynthesis. Methylesterase shown to have methyl jasmonate (MeJA) esterase activity in vitro. This chain is Methylesterase 10, found in Arabidopsis thaliana (Mouse-ear cress).